A 223-amino-acid polypeptide reads, in one-letter code: Urease accessory protein UreG (223 aa).

The segment at 1–30 (MAKHSHDHTHDHHDRPRRVRKPGEPLRIGV) is disordered. GTP is bound at residue 32–39 (GPVGSGKT).

It belongs to the SIMIBI class G3E GTPase family. UreG subfamily. Homodimer. UreD, UreF and UreG form a complex that acts as a GTP-hydrolysis-dependent molecular chaperone, activating the urease apoprotein by helping to assemble the nickel containing metallocenter of UreC. The UreE protein probably delivers the nickel.

Its subcellular location is the cytoplasm. Functionally, facilitates the functional incorporation of the urease nickel metallocenter. This process requires GTP hydrolysis, probably effectuated by UreG. In Mycobacterium ulcerans (strain Agy99), this protein is Urease accessory protein UreG.